The chain runs to 226 residues: Cytidylate kinase (226 aa).

Residue 12-20 (GPSGAGKGT) coordinates ATP.

Belongs to the cytidylate kinase family. Type 1 subfamily.

The protein resides in the cytoplasm. The enzyme catalyses CMP + ATP = CDP + ADP. The catalysed reaction is dCMP + ATP = dCDP + ADP. In Vibrio vulnificus (strain YJ016), this protein is Cytidylate kinase.